Consider the following 306-residue polypeptide: Protein FAM228A (306 aa).

Residues 237–277 (HASKLSQQNKGAEKKGLALGTRAQRPRSWAAADSPQGTPLV) form a disordered region. Phosphoserine is present on serine 270.

The protein belongs to the FAM228 family.

This is Protein FAM228A (Fam228a) from Rattus norvegicus (Rat).